Consider the following 446-residue polypeptide: tRNA-2-methylthio-N(6)-dimethylallyladenosine synthase (446 aa).

The 118-residue stretch at 2-119 (KKIYIKTFGC…LPELIAQRRE (118 aa)) folds into the MTTase N-terminal domain. [4Fe-4S] cluster-binding residues include cysteine 11, cysteine 48, cysteine 82, cysteine 156, cysteine 160, and cysteine 163. In terms of domain architecture, Radical SAM core spans 142 to 376 (RVEGGAAFVS…RIEAQAQGVN (235 aa)). The TRAM domain occupies 377-440 (RSMVGSVQRV…PHSLRGEAVT (64 aa)).

Belongs to the methylthiotransferase family. MiaB subfamily. Monomer. Requires [4Fe-4S] cluster as cofactor.

Its subcellular location is the cytoplasm. It catalyses the reaction N(6)-dimethylallyladenosine(37) in tRNA + (sulfur carrier)-SH + AH2 + 2 S-adenosyl-L-methionine = 2-methylsulfanyl-N(6)-dimethylallyladenosine(37) in tRNA + (sulfur carrier)-H + 5'-deoxyadenosine + L-methionine + A + S-adenosyl-L-homocysteine + 2 H(+). Functionally, catalyzes the methylthiolation of N6-(dimethylallyl)adenosine (i(6)A), leading to the formation of 2-methylthio-N6-(dimethylallyl)adenosine (ms(2)i(6)A) at position 37 in tRNAs that read codons beginning with uridine. This is tRNA-2-methylthio-N(6)-dimethylallyladenosine synthase from Thiobacillus denitrificans (strain ATCC 25259 / T1).